A 250-amino-acid chain; its full sequence is Exosome complex component Rrp41 (250 aa).

It belongs to the RNase PH family. Rrp41 subfamily. In terms of assembly, component of the archaeal exosome complex. Forms a hexameric ring-like arrangement composed of 3 Rrp41-Rrp42 heterodimers. The hexameric ring associates with a trimer of Rrp4 and/or Csl4 subunits.

It localises to the cytoplasm. Catalytic component of the exosome, which is a complex involved in RNA degradation. Has 3'-&gt;5' exoribonuclease activity. Can also synthesize heteromeric RNA-tails. This Pyrococcus furiosus (strain ATCC 43587 / DSM 3638 / JCM 8422 / Vc1) protein is Exosome complex component Rrp41.